A 275-amino-acid chain; its full sequence is Urease accessory protein UreD (275 aa).

Belongs to the UreD family. As to quaternary structure, ureD, UreF and UreG form a complex that acts as a GTP-hydrolysis-dependent molecular chaperone, activating the urease apoprotein by helping to assemble the nickel containing metallocenter of UreC. The UreE protein probably delivers the nickel.

The protein localises to the cytoplasm. Its function is as follows. Required for maturation of urease via the functional incorporation of the urease nickel metallocenter. In Cereibacter sphaeroides (strain ATCC 17023 / DSM 158 / JCM 6121 / CCUG 31486 / LMG 2827 / NBRC 12203 / NCIMB 8253 / ATH 2.4.1.) (Rhodobacter sphaeroides), this protein is Urease accessory protein UreD.